The sequence spans 352 residues: Deoxyhypusine synthase-like protein (352 aa).

This sequence belongs to the deoxyhypusine synthase family.

This Coxiella burnetii (strain Dugway 5J108-111) protein is Deoxyhypusine synthase-like protein.